A 99-amino-acid polypeptide reads, in one-letter code: UPF0386 protein mll0189 (99 aa).

This sequence belongs to the UPF0386 family.

The protein is UPF0386 protein mll0189 of Mesorhizobium japonicum (strain LMG 29417 / CECT 9101 / MAFF 303099) (Mesorhizobium loti (strain MAFF 303099)).